We begin with the raw amino-acid sequence, 356 residues long: sn-glycerol-3-phosphate import ATP-binding protein UgpC (356 aa).

Residues 4 to 235 (LKLQAVTKSW…PASRFVASFI (232 aa)) form the ABC transporter domain. 37 to 44 (GPSGCGKS) lines the ATP pocket.

Belongs to the ABC transporter superfamily. sn-glycerol-3-phosphate importer (TC 3.A.1.1.3) family. The complex is composed of two ATP-binding proteins (UgpC), two transmembrane proteins (UgpA and UgpE) and a solute-binding protein (UgpB).

It localises to the cell inner membrane. The enzyme catalyses sn-glycerol 3-phosphate(out) + ATP + H2O = sn-glycerol 3-phosphate(in) + ADP + phosphate + H(+). In terms of biological role, part of the ABC transporter complex UgpBAEC involved in sn-glycerol-3-phosphate (G3P) import. Responsible for energy coupling to the transport system. This is sn-glycerol-3-phosphate import ATP-binding protein UgpC from Salmonella paratyphi A (strain ATCC 9150 / SARB42).